The primary structure comprises 251 residues: uncharacterized protein (251 aa).

The protein resides in the mitochondrion. This is an uncharacterized protein from Arabidopsis thaliana (Mouse-ear cress).